Reading from the N-terminus, the 36-residue chain is Kappa-actitoxin-Avd6a (36 aa).

In terms of domain architecture, ShKT spans Cys2–Cys36. Cystine bridges form between Cys2–Cys36, Cys11–Cys29, and Cys20–Cys33. The interval Lys24 to Tyr25 is crucial for binding to potassium channels.

The protein belongs to the sea anemone type 1 potassium channel toxin family. Type 1b subfamily.

It localises to the secreted. Its subcellular location is the nematocyst. Its function is as follows. Blocks voltage-gated potassium channels Kv1.2/KCNA2 (IC(50)=140 nM). In Anemonia sulcata (Mediterranean snakelocks sea anemone), this protein is Kappa-actitoxin-Avd6a.